The chain runs to 317 residues: Probable transcription factor At5g61620 (317 aa).

The segment at 12-25 (CSHCGHNGHNARTC) adopts a CCHC-type zinc-finger fold. A disordered region spans residues 77–111 (DPIAAVDDTGYHSDGQIHSKKGKTAHEKKKGKPWT). The segment covering 94-108 (HSKKGKTAHEKKKGK) has biased composition (basic residues). The HTH myb-type domain occupies 102–158 (HEKKKGKPWTEEEHRNFLIGLNKLGKGDWRGIAKSFVSTRTPTQVASHAQKYFIRLN). Positions 130–154 (WRGIAKSFVSTRTPTQVASHAQKYF) form a DNA-binding region, H-T-H motif. The segment at 173-206 (SLEDQKEKERNSQDASTKTPPKQPITGIQQPVVQ) is disordered. The span at 175-184 (EDQKEKERNS) shows a compositional bias: basic and acidic residues. The segment covering 185–206 (QDASTKTPPKQPITGIQQPVVQ) has biased composition (polar residues).

It localises to the nucleus. Probable transcription factor involved in somatic embryogenesis. Acts as a positive regulator of BHLH109. The polypeptide is Probable transcription factor At5g61620 (Arabidopsis thaliana (Mouse-ear cress)).